Here is a 383-residue protein sequence, read N- to C-terminus: S-adenosylmethionine synthase (383 aa).

His15 is an ATP binding site. Asp17 is a Mg(2+) binding site. Glu43 is a binding site for K(+). Residues Glu56 and Gln99 each contribute to the L-methionine site. The interval 99–109 (QSPDINQGVDR) is flexible loop. ATP is bound by residues 164–166 (DAK), 230–231 (RF), Asp239, 245–246 (RK), Ala262, and Lys266. Asp239 contributes to the L-methionine binding site. Lys270 is an L-methionine binding site.

The protein belongs to the AdoMet synthase family. As to quaternary structure, homotetramer; dimer of dimers. Requires Mg(2+) as cofactor. It depends on K(+) as a cofactor.

The protein localises to the cytoplasm. It catalyses the reaction L-methionine + ATP + H2O = S-adenosyl-L-methionine + phosphate + diphosphate. It functions in the pathway amino-acid biosynthesis; S-adenosyl-L-methionine biosynthesis; S-adenosyl-L-methionine from L-methionine: step 1/1. Catalyzes the formation of S-adenosylmethionine (AdoMet) from methionine and ATP. The overall synthetic reaction is composed of two sequential steps, AdoMet formation and the subsequent tripolyphosphate hydrolysis which occurs prior to release of AdoMet from the enzyme. This is S-adenosylmethionine synthase from Shewanella baltica (strain OS223).